The following is a 143-amino-acid chain: Large ribosomal subunit protein uL11 (143 aa).

This sequence belongs to the universal ribosomal protein uL11 family. Part of the ribosomal stalk of the 50S ribosomal subunit. Interacts with L10 and the large rRNA to form the base of the stalk. L10 forms an elongated spine to which L12 dimers bind in a sequential fashion forming a multimeric L10(L12)X complex. One or more lysine residues are methylated.

Forms part of the ribosomal stalk which helps the ribosome interact with GTP-bound translation factors. The chain is Large ribosomal subunit protein uL11 from Teredinibacter turnerae (strain ATCC 39867 / T7901).